The primary structure comprises 286 residues: Aminoglycoside N(3)-acetyltransferase III (286 aa).

This sequence belongs to the antibiotic N-acetyltransferase family.

It carries out the reaction a 2-deoxystreptamine antibiotic + acetyl-CoA = an N(3)-acetyl-2-deoxystreptamine antibiotic + CoA + H(+). Resistance to antibiotics containing the 2-deoxy-streptamine ring including gentamicin, kanamycin, tobramycin, neomycin and apramycin. The polypeptide is Aminoglycoside N(3)-acetyltransferase III (aacC2) (Acinetobacter baumannii).